The chain runs to 500 residues: Cytochrome P450 2D20 (500 aa).

C446 is a binding site for heme.

It belongs to the cytochrome P450 family. The cofactor is heme.

Its subcellular location is the endoplasmic reticulum membrane. The protein localises to the microsome membrane. The sequence is that of Cytochrome P450 2D20 (CYP2D20) from Mesocricetus auratus (Golden hamster).